Here is an 86-residue protein sequence, read N- to C-terminus: Progonadoliberin-2 (86 aa).

Residues Met1 to Ser24 form the signal peptide. A Pyrrolidone carboxylic acid modification is found at Gln25. Gly34 carries the glycine amide modification.

The protein belongs to the GnRH family.

The protein resides in the secreted. Stimulates the secretion of gonadotropins. This chain is Progonadoliberin-2 (gnrh2), found in Rutilus rutilus (Roach).